The chain runs to 220 residues: Guanylate kinase (220 aa).

Positions 16-195 (GLMFVLSSPS…AFESVKAILR (180 aa)) constitute a Guanylate kinase-like domain. 23–30 (SPSGAGKT) provides a ligand contact to ATP.

This sequence belongs to the guanylate kinase family.

It localises to the cytoplasm. The catalysed reaction is GMP + ATP = GDP + ADP. Functionally, essential for recycling GMP and indirectly, cGMP. This Rhodopseudomonas palustris (strain HaA2) protein is Guanylate kinase.